A 222-amino-acid polypeptide reads, in one-letter code: Secreted protein D (222 aa).

The signal sequence occupies residues 1-22 (MKIYYLFFVLIYLIYFINLVYC). Asparagine 25 carries N-linked (GlcNAc...) asparagine glycosylation.

This sequence belongs to the Sct family.

It is found in the secreted. The sequence is that of Secreted protein D from Dictyostelium discoideum (Social amoeba).